A 453-amino-acid chain; its full sequence is Allantoinase (453 aa).

The Zn(2+) site is built by H59, H61, K146, H186, H242, and D315. K146 is modified (N6-carboxylysine).

It belongs to the metallo-dependent hydrolases superfamily. Allantoinase family. Homotetramer. Zn(2+) serves as cofactor. In terms of processing, carboxylation allows a single lysine to coordinate two zinc ions.

It catalyses the reaction (S)-allantoin + H2O = allantoate + H(+). Its pathway is nitrogen metabolism; (S)-allantoin degradation; allantoate from (S)-allantoin: step 1/1. Its function is as follows. Catalyzes the conversion of allantoin (5-ureidohydantoin) to allantoic acid by hydrolytic cleavage of the five-member hydantoin ring. In Salmonella agona (strain SL483), this protein is Allantoinase.